Here is a 498-residue protein sequence, read N- to C-terminus: NADH-quinone oxidoreductase subunit N 2 (498 aa).

The next 14 helical transmembrane spans lie at 19 to 39, 47 to 67, 83 to 103, 114 to 134, 136 to 156, 171 to 191, 215 to 235, 249 to 269, 282 to 302, 317 to 337, 345 to 365, 389 to 409, 420 to 440, and 468 to 488; these read VATQ…IALF, IVGY…IPLW, YSLT…VLSL, SEYY…AQGA, LIIL…LTGF, LLIG…LYGA, IYLL…VAMA, PTPI…AALL, IWAP…NIGA, IGHA…GGIA, VLLY…VLIA, LAVA…TGGF, WLSG…IAAF, and AGLA…TPAI.

The protein belongs to the complex I subunit 2 family. In terms of assembly, NDH-1 is composed of 14 different subunits. Subunits NuoA, H, J, K, L, M, N constitute the membrane sector of the complex.

It localises to the cell membrane. The catalysed reaction is a quinone + NADH + 5 H(+)(in) = a quinol + NAD(+) + 4 H(+)(out). Functionally, NDH-1 shuttles electrons from NADH, via FMN and iron-sulfur (Fe-S) centers, to quinones in the respiratory chain. The immediate electron acceptor for the enzyme in this species is believed to be ubiquinone. Couples the redox reaction to proton translocation (for every two electrons transferred, four hydrogen ions are translocated across the cytoplasmic membrane), and thus conserves the redox energy in a proton gradient. The polypeptide is NADH-quinone oxidoreductase subunit N 2 (Roseiflexus castenholzii (strain DSM 13941 / HLO8)).